A 417-amino-acid chain; its full sequence is 3-oxoacyl-[acyl-carrier-protein] synthase 2 (417 aa).

In terms of domain architecture, Ketosynthase family 3 (KS3) spans 10 to 416 (FPYVVVTGIA…GHNVAIAFGR (407 aa)). Catalysis depends on for beta-ketoacyl synthase activity residues C170, H311, and H346.

This sequence belongs to the thiolase-like superfamily. Beta-ketoacyl-ACP synthases family.

The protein resides in the cytoplasm. The enzyme catalyses an ultra-long-chain di-unsaturated fatty acyl-[ACP] + malonyl-[ACP] + H(+) = a 3-oxo-ultra-long-chain di-unsaturated fatty acyl-[ACP] + holo-[ACP] + CO2. It functions in the pathway lipid metabolism; mycolic acid biosynthesis. In terms of biological role, part of the mycobacterial fatty acid elongation system FAS-II, which is involved in mycolic acid biosynthesis. Catalyzes the elongation of long chain acyl-ACP substrates by the addition of two carbons from malonyl-ACP to an acyl acceptor. Involved in extension of the mycolate chains to full lengths and produces longer chain multiunsaturated hydrocarbons averaging 54 carbons in length. The polypeptide is 3-oxoacyl-[acyl-carrier-protein] synthase 2 (kasB) (Mycobacterium bovis (strain ATCC BAA-935 / AF2122/97)).